Reading from the N-terminus, the 347-residue chain is NADH-quinone oxidoreductase subunit H (347 aa).

8 helical membrane passes run 21-41, 87-107, 120-140, 160-180, 194-214, 259-279, 282-302, and 324-344; these read IAGILLIALPLMLGVAMIIYA, GLFLIAPIITFTVALMAWAVI, VGLLYVLAISSLGVYGVVIAG, ISYEVSIGFILICVVLWAGTF, WIINGFVANPLLFPMWVMFLI, LLMCALNAVLFWGGYLPPLDI, LYLVPGFVWLLLKILFFFFIF, and VFLPVSLLFVFLVSGYLMATG.

This sequence belongs to the complex I subunit 1 family. NDH-1 is composed of 14 different subunits. Subunits NuoA, H, J, K, L, M, N constitute the membrane sector of the complex.

The protein localises to the cell inner membrane. The catalysed reaction is a quinone + NADH + 5 H(+)(in) = a quinol + NAD(+) + 4 H(+)(out). In terms of biological role, NDH-1 shuttles electrons from NADH, via FMN and iron-sulfur (Fe-S) centers, to quinones in the respiratory chain. The immediate electron acceptor for the enzyme in this species is believed to be ubiquinone. Couples the redox reaction to proton translocation (for every two electrons transferred, four hydrogen ions are translocated across the cytoplasmic membrane), and thus conserves the redox energy in a proton gradient. This subunit may bind ubiquinone. The sequence is that of NADH-quinone oxidoreductase subunit H from Novosphingobium aromaticivorans (strain ATCC 700278 / DSM 12444 / CCUG 56034 / CIP 105152 / NBRC 16084 / F199).